We begin with the raw amino-acid sequence, 289 residues long: Bis(5'-nucleosyl)-tetraphosphatase, symmetrical (289 aa).

The protein belongs to the Ap4A hydrolase family.

The enzyme catalyses P(1),P(4)-bis(5'-adenosyl) tetraphosphate + H2O = 2 ADP + 2 H(+). Its function is as follows. Hydrolyzes diadenosine 5',5'''-P1,P4-tetraphosphate to yield ADP. This is Bis(5'-nucleosyl)-tetraphosphatase, symmetrical from Yersinia pestis bv. Antiqua (strain Antiqua).